The chain runs to 539 residues: O-phosphoserine--tRNA(Cys) ligase (539 aa).

Substrate is bound by residues 188–190, 233–235, 275–276, and asparagine 319; these read HMT, SAS, and YY.

This sequence belongs to the class-II aminoacyl-tRNA synthetase family. O-phosphoseryl-tRNA(Cys) synthetase subfamily. As to quaternary structure, homotetramer. Interacts with SepCysS.

It catalyses the reaction tRNA(Cys) + O-phospho-L-serine + ATP = O-phospho-L-seryl-tRNA(Cys) + AMP + diphosphate. In terms of biological role, catalyzes the attachment of O-phosphoserine (Sep) to tRNA(Cys). This chain is O-phosphoserine--tRNA(Cys) ligase (sepS), found in Methanocaldococcus jannaschii (strain ATCC 43067 / DSM 2661 / JAL-1 / JCM 10045 / NBRC 100440) (Methanococcus jannaschii).